Here is a 213-residue protein sequence, read N- to C-terminus: LexA repressor (213 aa).

The H-T-H motif DNA-binding region spans 27–47; that stretch reads QTEIARAFGFKGVRAAQYHLE. Catalysis depends on for autocatalytic cleavage activity residues S133 and K170.

This sequence belongs to the peptidase S24 family. As to quaternary structure, homodimer.

It catalyses the reaction Hydrolysis of Ala-|-Gly bond in repressor LexA.. Functionally, represses a number of genes involved in the response to DNA damage (SOS response), including recA and lexA. In the presence of single-stranded DNA, RecA interacts with LexA causing an autocatalytic cleavage which disrupts the DNA-binding part of LexA, leading to derepression of the SOS regulon and eventually DNA repair. This Xanthomonas campestris protein is LexA repressor.